A 173-amino-acid polypeptide reads, in one-letter code: uncharacterized protein (173 aa).

Residues Val-4–Val-173 form the N-acetyltransferase domain. Acetyl-CoA-binding positions include Ile-97–Leu-99, Arg-106–Lys-110, and Asn-136–Asn-138.

This is an uncharacterized protein from Lactobacillus delbrueckii subsp. lactis.